A 624-amino-acid chain; its full sequence is Chaperone protein HtpG (624 aa).

Residues 1–336 (MKTQKKEVYN…SSDLPLNISR (336 aa)) form an a; substrate-binding region. Positions 337 to 552 (EILQDNSITE…STEMTTQMAK (216 aa)) are b. Positions 553-624 (LFSAAGQSVP…ISRMNKLLIK (72 aa)) are c.

The protein belongs to the heat shock protein 90 family. In terms of assembly, homodimer.

The protein resides in the cytoplasm. Functionally, molecular chaperone. Has ATPase activity. This Buchnera aphidicola subsp. Acyrthosiphon pisum (strain APS) (Acyrthosiphon pisum symbiotic bacterium) protein is Chaperone protein HtpG.